The primary structure comprises 164 residues: HTH-type transcriptional regulator IscR (164 aa).

The HTH rrf2-type domain occupies 2–131 (RLTSKGRYAV…NNITLGELVN (130 aa)). Positions 28-51 (LADISERQGISLSYLEQLFSRLRK) form a DNA-binding region, H-T-H motif. Residues Cys92, Cys98, and Cys104 each contribute to the [2Fe-2S] cluster site.

[2Fe-2S] cluster serves as cofactor.

Regulates the transcription of several operons and genes involved in the biogenesis of Fe-S clusters and Fe-S-containing proteins. This chain is HTH-type transcriptional regulator IscR, found in Salmonella agona (strain SL483).